An 893-amino-acid chain; its full sequence is UPF0182 protein CLK_3152 (893 aa).

7 helical membrane-spanning segments follow: residues 9 to 29 (IPLF…NFII), 49 to 69 (AIII…WMYY), 94 to 114 (LFFI…SSSY), 154 to 174 (VIIS…FILE), 202 to 222 (LAIV…IKIW), 246 to 266 (FYKI…LSIV), and 273 to 293 (VSIC…ASFL).

The protein belongs to the UPF0182 family.

The protein localises to the cell membrane. In Clostridium botulinum (strain Loch Maree / Type A3), this protein is UPF0182 protein CLK_3152.